The sequence spans 158 residues: Protein EOLA1 (158 aa).

An ASCH domain is found at 6–92 (LSFRQPYAGF…IAGLVDIGET (87 aa)).

The protein belongs to the EOLA family. As to quaternary structure, interacts with MT2A. Expressed primarily in heart, skeletal muscle, kidney, liver and placenta. Relatively high level of expression in spleen, colon and small intestine. Almost no expression in brain, thymus, lung and peripheral blood leukocytes. Expressed in epithelial cells (at protein level).

May play a role in cell protection during the inflammatory response. In epithelial cells, negatively regulates IL6 production and apoptosis through the regulation of MT2A expression. The polypeptide is Protein EOLA1 (Homo sapiens (Human)).